Consider the following 320-residue polypeptide: Meso-diaminopimelate D-dehydrogenase (320 aa).

NADP(+) is bound by residues 11–14 (YGNL), 35–37 (SRR), 65–68 (CMGS), 88–90 (TYD), and 117–121 (TGWDP). Residues Asp-90, Asp-120, Trp-144, 150-151 (QG), Thr-169, Arg-195, His-244, and Asn-270 contribute to the substrate site.

Homodimer.

The catalysed reaction is meso-2,6-diaminopimelate + NADP(+) + H2O = (S)-2-amino-6-oxoheptanedioate + NH4(+) + NADPH + H(+). It participates in amino-acid biosynthesis; L-lysine biosynthesis via DAP pathway; DL-2,6-diaminopimelate from (S)-tetrahydrodipicolinate: step 1/1. With respect to regulation, l,L-2,6-diaminopimelate and D,D-2,6-diaminopimelate competitively inhibit the oxidative deamination of meso-2,6-diaminopimelate. The enzyme is also inhibited by L-cysteine, and by p-chloromercuribenzoate, iodoacetic acid and HgCl(2) in vitro. Its function is as follows. Catalyzes the reversible NADPH-dependent reductive amination of L-2-amino-6-oxopimelate, the acyclic form of L-tetrahydrodipicolinate, to generate the meso compound, D,L-2,6-diaminopimelate. Probably plays a role in lysine biosynthesis. Exhibits a high substrate specificity for meso-2,6-diaminopimelate, since L,L-2,6-diaminopimelate, D,D-2,6-diaminopimelate, L-glutamate, L-alanine, L-leucine, L-valine, L-aspartate, L-threonine, L-homoserine, L-methionine, L-lysine, L-serine, L-phenylalanine, L-tyrosine, L-tryptophan, L-ornithine, L-histidine, L-arginine, D-glutamate, and D-alanine are not substrates for the oxidative deamination reaction. Can use NAD(+) only poorly since the activity observed in the presence of NAD(+) is about 3% of that with NADP(+). In Corynebacterium glutamicum (strain ATCC 13032 / DSM 20300 / JCM 1318 / BCRC 11384 / CCUG 27702 / LMG 3730 / NBRC 12168 / NCIMB 10025 / NRRL B-2784 / 534), this protein is Meso-diaminopimelate D-dehydrogenase (ddh).